Here is a 352-residue protein sequence, read N- to C-terminus: Maleylacetate reductase (352 aa).

The protein belongs to the iron-containing alcohol dehydrogenase family.

It catalyses the reaction 3-oxoadipate + NAD(+) = maleylacetate + NADH + H(+). The enzyme catalyses 3-oxoadipate + NADP(+) = maleylacetate + NADPH + H(+). It functions in the pathway xenobiotic degradation; (2,4,5-trichlorophenoxy)acetate degradation. The protein is Maleylacetate reductase (tftE) of Burkholderia cepacia (Pseudomonas cepacia).